Reading from the N-terminus, the 232-residue chain is MAKIAKRVQKSREGVDPTKLYGLTEAVTLVKERATAKFDETIEVAMNLGVDPRHADQMVRGVVNLPNGTGRSVRVAVFARGAKADEAKAAGADVVGAEELVEIVQGGKIDFDRCIATPDMMPLVGRLGKVLGPRGMMPNPKVGTVTMDVTGAVKASKGGAVEFRVEKAGIVHAGIGKASFDAKALEENIRAFADAVIKAKPTGAKGNYVKRVAVSSTMGPGLKVDPATISAA.

It belongs to the universal ribosomal protein uL1 family. As to quaternary structure, part of the 50S ribosomal subunit.

Its function is as follows. Binds directly to 23S rRNA. The L1 stalk is quite mobile in the ribosome, and is involved in E site tRNA release. Protein L1 is also a translational repressor protein, it controls the translation of the L11 operon by binding to its mRNA. This Rhizobium meliloti (strain 1021) (Ensifer meliloti) protein is Large ribosomal subunit protein uL1.